Consider the following 87-residue polypeptide: Mu-theraphotoxin-Cg1a (87 aa).

Positions 1–21 (MKVLVLITLAVLGAMFVWTSA) are cleaved as a signal peptide. Positions 22–50 (AELEERGSDQRDSPAWVKSMERIFQSEER) are excised as a propeptide. Disulfide bonds link C52-C66, C59-C71, and C65-C79.

Belongs to the neurotoxin 10 (Hwtx-1) family. 39 (Jztx-34) subfamily. Expressed by the venom gland.

The protein localises to the secreted. In terms of biological role, potent and selective inhibitor of hNav1.7/SCN9A (IC(50)=610 nM). Also shows a weak activity towards Nav1.3/SCN3A (IC(50)=7950 nM). In addition, inhibits voltage-gated potassium channels (Kv) in rat DRG neurons. It does not alter the voltage dependence of activation, but it causes a small hyperpolarizing shift in the steady-state inactivations of Nav1.7/SNC9A. Chimera experiments show that the toxin binds to the DIIS3-S4 linker (site 4) of Nav1.7/SCN9A, whereas Nav1.7/SCN9A Asp-827 residue is shown by substitution experiments to be critical for its sensitivity. The toxin traps the domain II voltage sensor in the closed configuration, and not in an outward position. In vivo, shows analgesic activity in three rodent pain models (formalin-induced, acid-induced, and thermal). The sequence is that of Mu-theraphotoxin-Cg1a from Chilobrachys guangxiensis (Chinese earth tiger tarantula).